We begin with the raw amino-acid sequence, 287 residues long: Nucleotide-binding protein Dtpsy_0831 (287 aa).

10–17 is an ATP binding site; it reads GMSGSGKS. 59-62 contacts GTP; sequence DVRS.

This sequence belongs to the RapZ-like family.

Its function is as follows. Displays ATPase and GTPase activities. The chain is Nucleotide-binding protein Dtpsy_0831 from Acidovorax ebreus (strain TPSY) (Diaphorobacter sp. (strain TPSY)).